Consider the following 390-residue polypeptide: Nuclear receptor subfamily 2 group F member 6 (390 aa).

The span at Met-1–Thr-15 shows a compositional bias: gly residues. A disordered region spans residues Met-1 to Arg-50. 2 positions are modified to phosphoserine: Ser-35 and Ser-41. Residues Gln-54–Pro-129 constitute a DNA-binding region (nuclear receptor). 2 consecutive NR C4-type zinc fingers follow at residues Cys-57–Cys-77 and Cys-93–Cys-117. Residues Pro-157–Gly-380 enclose the NR LBD domain. The segment at Leu-314–Gly-390 is important for dimerization.

The protein belongs to the nuclear hormone receptor family. NR2 subfamily. As to quaternary structure, binds DNA as dimer; homodimer and heterodimer with NR2F2 and probably NR2F1. Interacts with THRB.

Its subcellular location is the nucleus. In terms of biological role, transcription factor predominantly involved in transcriptional repression. Binds to promoter/enhancer response elements that contain the imperfect 5'-AGGTCA-3' direct or inverted repeats with various spacings which are also recognized by other nuclear hormone receptors. Involved in modulation of hormonal responses. Represses transcriptional activity of the lutropin-choriogonadotropic hormone receptor/LHCGR gene, the renin/REN gene and the oxytocin-neurophysin/OXT gene. Represses the triiodothyronine-dependent and -independent transcriptional activity of the thyroid hormone receptor gene in a cell type-specific manner. The corepressing function towards thyroid hormone receptor beta/THRB involves at least in part the inhibition of THRB binding to triiodothyronine response elements (TREs) by NR2F6. Inhibits NFATC transcription factor DNA binding and subsequently its transcriptional activity. Acts as transcriptional repressor of IL-17 expression in Th-17 differentiated CD4(+) T cells and may be involved in induction and/or maintenance of peripheral immunological tolerance and autoimmunity. Involved in development of forebrain circadian clock; is required early in the development of the locus coeruleus (LC). The sequence is that of Nuclear receptor subfamily 2 group F member 6 (Nr2f6) from Rattus norvegicus (Rat).